The sequence spans 713 residues: Cadherin-13 (713 aa).

Residues 1-22 (MQPRTPLVLCVLLSQVLLLTSA) form the signal peptide. A propeptide spanning residues 23-138 (EDLDCIPGFQ…RTSPVPRQKR (116 aa)) is cleaved from the precursor. 2 N-linked (GlcNAc...) asparagine glycosylation sites follow: asparagine 52 and asparagine 86. Cadherin domains follow at residues 139-245 (SIVV…RPIF), 246-363 (REGP…SPKF), 364-477 (TKKE…GPVF), 478-585 (YPDP…APFI), and 584-690 (FIYP…VDSN). N-linked (GlcNAc...) asparagine glycans are attached at residues asparagine 382, asparagine 489, asparagine 500, asparagine 530, asparagine 598, asparagine 638, and asparagine 671. Asparagine 690 carries GPI-anchor amidated asparagine lipidation. Residues 691 to 713 (AVGALRFSLPSLLLLSLFSLACL) constitute a propeptide, removed in mature form.

As to quaternary structure, by contrast to classical cadherins, homodimerization in trans is not mediated by cadherin EC1 domain strand-swapping, but instead through a homophilic adhesive interface which joins two elongated EC1-EC2 domains through a region near their Ca2+-binding sites to form a tetrahedral, X-like shape.

Its subcellular location is the cell membrane. It localises to the cytoplasm. In terms of biological role, cadherins are calcium-dependent cell adhesion proteins. They preferentially interact with themselves in a homophilic manner in connecting cells; cadherins may thus contribute to the sorting of heterogeneous cell types. May act as a negative regulator of neural cell growth. The sequence is that of Cadherin-13 (CDH13) from Pongo abelii (Sumatran orangutan).